Reading from the N-terminus, the 87-residue chain is U14-lycotoxin-Ls1a (87 aa).

A signal peptide spans 1–20; sequence MNSKVFAVLLLLALLTCVLS. The WAP domain maps to 21 to 66; it reads EKYCPTPRNTSCKKMNIRNNCCRDSDCTSNAFCCAEPCGNFCHKAS. 5 disulfides stabilise this stretch: Cys-24/Cys-54, Cys-32/Cys-58, Cys-41/Cys-53, Cys-42/Cys-80, and Cys-47/Cys-62.

The protein belongs to the venom protein 11 family. 01 (wap-1) subfamily. Post-translationally, contains 5 disulfide bonds. As to expression, expressed by the venom gland.

The protein resides in the secreted. Has antibacterial activity. In Lycosa singoriensis (Wolf spider), this protein is U14-lycotoxin-Ls1a.